The following is a 420-amino-acid chain: Pre-mRNA-splicing factor RBM22 (420 aa).

Residues 159–186 form a C3H1-type zinc finger; sequence RNRPHICSFWVKGECKRGEECPYRHEKP. The 74-residue stretch at 232–305 folds into the RRM domain; the sequence is TTLYVGGLGD…RRLNVKWGRS (74 aa). Disordered stretches follow at residues 303–343 and 372–420; these read GRSQ…AAEE and APPP…HSSP. Residues 309–318 show a composition bias toward basic and acidic residues; that stretch reads RGKEKDKEGT.

This sequence belongs to the SLT11 family. As to quaternary structure, component of the pre-catalytic and catalytic spliceosome complexes. Component of the postcatalytic spliceosome P complex.

Its subcellular location is the nucleus. The protein localises to the cytoplasm. Its function is as follows. Required for pre-mRNA splicing as component of the activated spliceosome. Involved in the first step of pre-mRNA splicing. Binds directly to the internal stem-loop (ISL) domain of the U6 snRNA and to the pre-mRNA intron near the 5' splice site during the activation and catalytic phases of the spliceosome cycle. The chain is Pre-mRNA-splicing factor RBM22 (RBM22) from Gallus gallus (Chicken).